The following is a 149-amino-acid chain: Calmodulin (149 aa).

Ala2 carries the N-acetylalanine modification. EF-hand domains are found at residues 8–43, 44–79, 81–116, and 117–149; these read EQIA…LGQN, PTEA…KMKD, DSEE…LGEK, and LTDE…MTAK. Positions 21, 23, 25, 27, 32, 57, 59, 61, 63, 68, 94, 96, 98, 100, and 105 each coordinate Ca(2+). Lys116 is modified (N6,N6,N6-trimethyllysine). Ca(2+) contacts are provided by Asp130, Asp132, Asp134, Gln136, and Glu141.

This sequence belongs to the calmodulin family.

Functionally, calmodulin acts as part of a calcium signal transduction pathway by mediating the control of a large number of enzymes, ion channels, aquaporins and other proteins through calcium-binding. Calcium-binding is required for the activation of calmodulin. Among the enzymes to be stimulated by the calmodulin-calcium complex are a number of protein kinases, such as myosin light-chain kinases and calmodulin-dependent protein kinase type II (CaMK2), and phosphatases. In Electrophorus electricus (Electric eel), this protein is Calmodulin (calm).